Reading from the N-terminus, the 85-residue chain is RNA-binding protein Hfq (85 aa).

The Sm domain occupies 9–68 (DPFLNELRKEKVPVSVFLVNGIKLHGIIDSFDQYVVMLKNSITQMVYKHAISTVVPSRMV).

This sequence belongs to the Hfq family. As to quaternary structure, homohexamer.

Functionally, RNA chaperone that binds small regulatory RNA (sRNAs) and mRNAs to facilitate mRNA translational regulation in response to envelope stress, environmental stress and changes in metabolite concentrations. Also binds with high specificity to tRNAs. In Legionella pneumophila (strain Paris), this protein is RNA-binding protein Hfq.